The chain runs to 352 residues: MKGILLNGYGESLDLLEYKTDLPVPKPIKSQVLIKIHSTSINPLDNVMRKGYASSIVDLKLKLPIILGRECSGEIVEIGDSVWDYEIGDQVWSASPPFSMGSHCEYITVDESEISLKPKNLTHQQSASIPFASLTAWNAIYNVLPTNKKITTNTKILVNGGNGSVGFFILQLLKKHLNVNQVSTTCNIKHFEKLKKLTLVNETIDYNNLKINDNDNNKFDLIFNCYDGGKNQNENEKKCIDALKDGGNLIGFNGPLVKFSDKDGVLSGLPMGMMNQLNSSERIKKQYSKNVHLDYAIFSPSGSTLKQISKLYENNILIPNIDKQFNLNQIKDAYTCFENSNSNGKIIINNKF.

The 338-residue stretch at Glu11–Ile348 folds into the Enoyl reductase (ER) domain. Positions 165, 206, 296, and 298 each coordinate NADPH.

It belongs to the zinc-containing alcohol dehydrogenase family. Quinone oxidoreductase subfamily.

Its subcellular location is the mitochondrion matrix. The enzyme catalyses a quinone + NADH + H(+) = a quinol + NAD(+). The catalysed reaction is a quinone + NADPH + H(+) = a quinol + NADP(+). It participates in cofactor biosynthesis; ubiquinone biosynthesis. NAD(P)H oxidoreductase involved in the ubiquinone biosynthetic pathway. Required for the O-methyltransferase activity of coq3. The sequence is that of NAD(P)H oxidoreductase RTN4IP1, mitochondrial (rtn4ip1) from Dictyostelium discoideum (Social amoeba).